A 284-amino-acid polypeptide reads, in one-letter code: Tropomyosin (284 aa).

Residues 1–284 (MDGIKKKMIA…DQTFAELTGY (284 aa)) adopt a coiled-coil conformation. The interval 111 to 131 (TKLEEASKTAEESERGRKDLE) is disordered.

The protein belongs to the tropomyosin family. As to quaternary structure, homodimer.

Functionally, tropomyosin, in association with the troponin complex, plays a central role in the calcium dependent regulation of muscle contraction. This Schistosoma haematobium (Blood fluke) protein is Tropomyosin.